Consider the following 556-residue polypeptide: Potassium-transporting ATPase potassium-binding subunit (556 aa).

10 helical membrane passes run 6–26 (AGLI…VPLG), 65–85 (GVLA…LVQG), 133–153 (GLAV…VALV), 176–196 (LRIL…GGAI), 249–269 (PTAW…FSLP), 283–303 (YAIA…MLWF), 378–398 (GLYG…LMVG), 419–439 (YFLV…ALPG), 483–503 (ALGL…LALA), and 526–546 (FVGM…LPML).

It belongs to the KdpA family. In terms of assembly, the system is composed of three essential subunits: KdpA, KdpB and KdpC.

The protein resides in the cell membrane. Functionally, part of the high-affinity ATP-driven potassium transport (or Kdp) system, which catalyzes the hydrolysis of ATP coupled with the electrogenic transport of potassium into the cytoplasm. This subunit binds the extracellular potassium ions and delivers the ions to the membrane domain of KdpB through an intramembrane tunnel. This chain is Potassium-transporting ATPase potassium-binding subunit, found in Mycolicibacterium paratuberculosis (strain ATCC BAA-968 / K-10) (Mycobacterium paratuberculosis).